Reading from the N-terminus, the 701-residue chain is 2-isopropylmalate synthase (701 aa).

The segment at methionine 1–serine 40 is disordered. Residues proline 31–serine 40 are compositionally biased toward polar residues. The region spanning proline 72–aspartate 346 is the Pyruvate carboxyltransferase domain. Residues aspartate 81, histidine 285, histidine 287, and asparagine 321 each contribute to the Mg(2+) site. The interval proline 491–arginine 701 is regulatory domain. Residues valine 575–proline 593 form a VNTR1 repeat. The segment at alanine 581 to valine 670 is disordered. A VNTR2 repeat occupies valine 594–proline 612. One copy of the VNTR3 repeat lies at valine 613 to proline 631. One copy of the VNTR4 repeat lies at valine 632–proline 650. Residues valine 651 to proline 669 form a VNTR5 repeat.

It belongs to the alpha-IPM synthase/homocitrate synthase family. LeuA type 2 subfamily. In terms of assembly, homodimer. It depends on Mg(2+) as a cofactor.

Its subcellular location is the cytoplasm. It carries out the reaction 3-methyl-2-oxobutanoate + acetyl-CoA + H2O = (2S)-2-isopropylmalate + CoA + H(+). It functions in the pathway amino-acid biosynthesis; L-leucine biosynthesis; L-leucine from 3-methyl-2-oxobutanoate: step 1/4. Catalyzes the condensation of the acetyl group of acetyl-CoA with 3-methyl-2-oxobutanoate (2-ketoisovalerate) to form 3-carboxy-3-hydroxy-4-methylpentanoate (2-isopropylmalate). The polypeptide is 2-isopropylmalate synthase (Mycobacterium bovis (strain ATCC BAA-935 / AF2122/97)).